Here is a 406-residue protein sequence, read N- to C-terminus: Leu/Ile/Val-binding protein homolog 5 (406 aa).

The first 29 residues, 1–29 (MIGTRLPAWTRVLACGVAGLSLMTISAKA), serve as a signal peptide directing secretion.

The protein belongs to the leucine-binding protein family.

Functionally, component of an amino-acid transport system. The chain is Leu/Ile/Val-binding protein homolog 5 from Brucella suis biovar 1 (strain 1330).